Here is a 616-residue protein sequence, read N- to C-terminus: Dihydroxy-acid dehydratase (616 aa).

Asp81 provides a ligand contact to Mg(2+). [2Fe-2S] cluster is bound at residue Cys122. Positions 123 and 124 each coordinate Mg(2+). Lys124 carries the post-translational modification N6-carboxylysine. A [2Fe-2S] cluster-binding site is contributed by Cys195. Residue Glu491 coordinates Mg(2+). Ser517 functions as the Proton acceptor in the catalytic mechanism.

It belongs to the IlvD/Edd family. As to quaternary structure, homodimer. The cofactor is [2Fe-2S] cluster. Mg(2+) serves as cofactor.

It carries out the reaction (2R)-2,3-dihydroxy-3-methylbutanoate = 3-methyl-2-oxobutanoate + H2O. The catalysed reaction is (2R,3R)-2,3-dihydroxy-3-methylpentanoate = (S)-3-methyl-2-oxopentanoate + H2O. It functions in the pathway amino-acid biosynthesis; L-isoleucine biosynthesis; L-isoleucine from 2-oxobutanoate: step 3/4. The protein operates within amino-acid biosynthesis; L-valine biosynthesis; L-valine from pyruvate: step 3/4. Its function is as follows. Functions in the biosynthesis of branched-chain amino acids. Catalyzes the dehydration of (2R,3R)-2,3-dihydroxy-3-methylpentanoate (2,3-dihydroxy-3-methylvalerate) into 2-oxo-3-methylpentanoate (2-oxo-3-methylvalerate) and of (2R)-2,3-dihydroxy-3-methylbutanoate (2,3-dihydroxyisovalerate) into 2-oxo-3-methylbutanoate (2-oxoisovalerate), the penultimate precursor to L-isoleucine and L-valine, respectively. The sequence is that of Dihydroxy-acid dehydratase from Escherichia coli (strain K12 / MC4100 / BW2952).